Here is a 216-residue protein sequence, read N- to C-terminus: Alanyl-tRNA editing protein AlaX-M (216 aa).

Histidine 99, histidine 103, and cysteine 182 together coordinate Zn(2+).

This sequence belongs to the class-II aminoacyl-tRNA synthetase family. Editing domain AlaX-M subfamily. Monomer. Zn(2+) is required as a cofactor.

It localises to the cytoplasm. Its function is as follows. Functions in trans to edit the amino acid moiety from mischarged charged Gly-tRNA(Ala) and Ser-tRNA(Ala). This is Alanyl-tRNA editing protein AlaX-M (alaXM) from Pyrococcus horikoshii (strain ATCC 700860 / DSM 12428 / JCM 9974 / NBRC 100139 / OT-3).